A 678-amino-acid chain; its full sequence is Macrolide export ATP-binding/permease protein MacB 1 (678 aa).

In terms of domain architecture, ABC transporter spans 11–249 (LRLENVSREF…PKMVDIPSVI (239 aa)). 47 to 54 (GTSGSGKS) provides a ligand contact to ATP. A run of 4 helical transmembrane segments spans residues 303–323 (ALTM…VALG), 558–578 (IAVI…LVSV), 608–628 (LVCL…GLLF), and 641–661 (AASI…FGFF).

The protein belongs to the ABC transporter superfamily. Macrolide exporter (TC 3.A.1.122) family. In terms of assembly, homodimer. Part of the tripartite efflux system MacAB-TolC, which is composed of an inner membrane transporter, MacB, a periplasmic membrane fusion protein, MacA, and an outer membrane component, TolC. The complex forms a large protein conduit and can translocate molecules across both the inner and outer membranes. Interacts with MacA.

It is found in the cell inner membrane. Its function is as follows. Part of the tripartite efflux system MacAB-TolC. MacB is a non-canonical ABC transporter that contains transmembrane domains (TMD), which form a pore in the inner membrane, and an ATP-binding domain (NBD), which is responsible for energy generation. Confers resistance against macrolides. The sequence is that of Macrolide export ATP-binding/permease protein MacB 1 from Yersinia pestis bv. Antiqua (strain Nepal516).